The primary structure comprises 183 residues: Caspase recruitment domain-containing protein 19 (183 aa).

Cys-7 and Cys-77 form a disulfide bridge. The region spanning 8 to 99 is the CARD domain; the sequence is DRLVQDTPFL…PLHSCLPSRH (92 aa). A helical membrane pass occupies residues 122-142; that stretch reads GPVAFLTCLGLAAGLALLIYC.

Associates with BCL10 by CARD-CARD interaction.

It is found in the endoplasmic reticulum membrane. Its subcellular location is the mitochondrion membrane. Plays a role in inhibiting the effects of BCL10-induced activation of NF-kappa-B. May inhibit the phosphorylation of BCL10 in a CARD-dependent manner. In Bos taurus (Bovine), this protein is Caspase recruitment domain-containing protein 19 (CARD19).